Reading from the N-terminus, the 419-residue chain is UDP-N-acetylmuramoylalanine--D-glutamate ligase (419 aa).

Position 109-115 (Gly-109–Thr-115) interacts with ATP.

This sequence belongs to the MurCDEF family.

Its subcellular location is the cytoplasm. It carries out the reaction UDP-N-acetyl-alpha-D-muramoyl-L-alanine + D-glutamate + ATP = UDP-N-acetyl-alpha-D-muramoyl-L-alanyl-D-glutamate + ADP + phosphate + H(+). The protein operates within cell wall biogenesis; peptidoglycan biosynthesis. In terms of biological role, cell wall formation. Catalyzes the addition of glutamate to the nucleotide precursor UDP-N-acetylmuramoyl-L-alanine (UMA). This Chlamydia felis (strain Fe/C-56) (Chlamydophila felis) protein is UDP-N-acetylmuramoylalanine--D-glutamate ligase.